A 151-amino-acid chain; its full sequence is Probable cGMP 3',5'-cyclic phosphodiesterase subunit delta (151 aa).

The protein belongs to the PDE6D/unc-119 family. As to quaternary structure, interacts with Pde6.

The protein resides in the nucleus. It is found in the cytoplasm. The sequence is that of Probable cGMP 3',5'-cyclic phosphodiesterase subunit delta from Drosophila willistoni (Fruit fly).